The sequence spans 232 residues: MTKHGKRIRGILKSYDFSKSYSLQEAIDILKQCPPVRFDQTVDVSIKLGIDPKKSDQQIRGSVSLPHGTGKTLKILVFAAGEKAKEALDAGADFVGSDDLVEKIRGGWVDCDVAVATPDMMREVGKLGKVLGPRNLMPTPKAGTVTMDVTKTIAELRKGKIEFKADRAGVCNAGVGKLSFDGHLLKENIETLCSALIKAKPPAAKGQYLVSFTVSSTMGPGISVDTRELMAS.

The protein belongs to the universal ribosomal protein uL1 family. As to quaternary structure, part of the 50S ribosomal subunit.

Binds directly to 23S rRNA. The L1 stalk is quite mobile in the ribosome, and is involved in E site tRNA release. Functionally, protein L1 is also a translational repressor protein, it controls the translation of the L11 operon by binding to its mRNA. The polypeptide is Large ribosomal subunit protein uL1 (Chlamydia abortus (strain DSM 27085 / S26/3) (Chlamydophila abortus)).